The following is a 717-amino-acid chain: F-box only protein 42 (717 aa).

Residues Met-1–Glu-30 are compositionally biased toward acidic residues. Positions Met-1–Pro-34 are disordered. One can recognise an F-box domain in the interval Asn-44 to Phe-93. 4 Kelch repeats span residues Ser-132–Asp-184, Leu-186–Asp-242, Met-244–Asp-293, and Thr-295–His-342. Residues Arg-361–Gly-452 form a disordered region. Residues Pro-363–Ser-376 show a composition bias toward low complexity. A phosphoserine mark is found at Ser-365 and Ser-373. Thr-378 bears the Phosphothreonine mark. Polar residues predominate over residues Gln-416–Gly-426. At Ser-552 the chain carries Phosphoserine. The segment covering Gly-570 to Ser-595 has biased composition (low complexity). Residues Gly-570–Gly-632 form a disordered region.

Component of some SCF complex, composed of CUL1, SKP1, RBX1 and FBXO42. Interacts (via the kelch domain) with p53/TP53; interaction is direct.

Functionally, substrate-recognition component of some SCF (SKP1-CUL1-F-box protein)-type E3 ubiquitin ligase complex. Specifically recognizes p53/TP53, promoting its ubiquitination and degradation. This is F-box only protein 42 (Fbxo42) from Mus musculus (Mouse).